Reading from the N-terminus, the 1544-residue chain is Lysine-specific demethylase 5B (1544 aa).

Positions 1–14 are enriched in pro residues; sequence MEPATTLPPGPRPA. The interval 1–22 is disordered; the sequence is MEPATTLPPGPRPALPLGGPGP. The region spanning 32–73 is the JmjN domain; that stretch reads CPVFEPSWEEFADPFAFIHKIRPIAEQTGICKVRPPPDWQPP. One can recognise an ARID domain in the interval 97-187; sequence TRVKLNFLDQ…ILNPYNLFLS (91 aa). Residues Lys148, Lys204, Lys209, Lys242, Lys274, and Lys278 each participate in a glycyl lysine isopeptide (Lys-Gly) (interchain with G-Cter in SUMO2) cross-link. A disordered region spans residues 200-228; it reads TSDTKDKEYKPHDIPQRQSVQPAETCPPA. Residues 202–214 are compositionally biased toward basic and acidic residues; that stretch reads DTKDKEYKPHDIP. The interval 269 to 297 is disordered; sequence NEKEMKSTIKQEPTEKKDCELESEKEKPK. The PHD-type 1 zinc-finger motif lies at 309-359; it reads LYVCLLCGSGNDEDRLLLCDGCDDSYHTFCLVPPLHDVPKGDWRCPKCLAQ. Tyr425 is a binding site for 2-oxoglutarate. The JmjC domain occupies 453-619; that stretch reads EYLDSGWNLN…LGRQCVEHYR (167 aa). His499 and Glu501 together coordinate Fe cation. 3 residues coordinate 2-oxoglutarate: Ser507, Asn509, and Lys517. His587 provides a ligand contact to Fe cation. The segment at 692–744 adopts a C5HC2 zinc-finger fold; sequence CIKCKTTCFMSAISCSCKPGLLVCLHHVKELCSCPPYKYNLRYRYTLDDLYPM. A Glycyl lysine isopeptide (Lys-Gly) (interchain with G-Cter in SUMO2) cross-link involves residue Lys769. N6-acetyllysine is present on Lys832. Ser986 is subject to Phosphoserine. The PHD-type 2 zinc-finger motif lies at 1176–1224; the sequence is MKVCLCQKTPATPMIQCELCRDAFHTSCVAAPSISQSSRIWLCPHCRRS. Over residues 1297 to 1314 the composition is skewed to polar residues; sequence QASATDKVSQPPGTTSFS. A disordered region spans residues 1297–1318; the sequence is QASATDKVSQPPGTTSFSLPDD. Ser1328 is subject to Phosphoserine. Polar residues predominate over residues 1374 to 1388; the sequence is PSSVQQADRSSPVRS. Positions 1374 to 1447 are disordered; the sequence is PSSVQQADRS…IKLSHPKDMD (74 aa). Over residues 1389–1427 the composition is skewed to basic and acidic residues; it reads SSEKNDCLRGKRDAINSPERKLKRRPEREGLPSERWDRV. Residues 1428-1441 are compositionally biased toward basic residues; the sequence is KHMRTPQKKKIKLS. Lys1450 is covalently cross-linked (Glycyl lysine isopeptide (Lys-Gly) (interchain with G-Cter in SUMO2)). Residue Ser1456 is modified to Phosphoserine. The PHD-type 3 zinc finger occupies 1484–1538; that stretch reads DAICPAVSCLQPEGDEVDWVQCDGSCNQWFHQVCVGVSPEMAEKEDYICVRCTGK.

It belongs to the JARID1 histone demethylase family. In terms of assembly, interacts with FOXG1B, PAX9, MYC, MYCN and RB1. Interacts with HDAC1, HDAC4, HDAC5 and HDAC7. Interacts (via PHD-type 1 zinc finger) with histone H3 unmodified at 'Lys-4'; the interaction is inhibited when histone H3 is methylated at 'Arg-2' or 'Lys-4'. It depends on Fe(2+) as a cofactor. In terms of tissue distribution, present at highest levels in testis, where it is enriched in spermatogonia and pachytene cells (at protein level).

It is found in the nucleus. It carries out the reaction N(6),N(6),N(6)-trimethyl-L-lysyl(4)-[histone H3] + 3 2-oxoglutarate + 3 O2 = L-lysyl(4)-[histone H3] + 3 formaldehyde + 3 succinate + 3 CO2. In terms of biological role, histone demethylase that demethylates 'Lys-4' of histone H3, thereby playing a central role in histone code. Does not demethylate histone H3 'Lys-9' or H3 'Lys-27'. Demethylates trimethylated, dimethylated and monomethylated H3 'Lys-4'. Acts as a transcriptional corepressor for FOXG1B and PAX9. Represses the CLOCK-BMAL1 heterodimer-mediated transcriptional activation of the core clock component PER2. This is Lysine-specific demethylase 5B (Kdm5b) from Mus musculus (Mouse).